The primary structure comprises 378 residues: Erythronate-4-phosphate dehydrogenase (378 aa).

Substrate-binding residues include S45 and T66. NAD(+) is bound by residues D146 and T175. R208 is an active-site residue. D232 is an NAD(+) binding site. E237 is a catalytic residue. The Proton donor role is filled by H254. G257 is a binding site for NAD(+). Y258 is a binding site for substrate.

Belongs to the D-isomer specific 2-hydroxyacid dehydrogenase family. PdxB subfamily. As to quaternary structure, homodimer.

Its subcellular location is the cytoplasm. The enzyme catalyses 4-phospho-D-erythronate + NAD(+) = (R)-3-hydroxy-2-oxo-4-phosphooxybutanoate + NADH + H(+). Its pathway is cofactor biosynthesis; pyridoxine 5'-phosphate biosynthesis; pyridoxine 5'-phosphate from D-erythrose 4-phosphate: step 2/5. Functionally, catalyzes the oxidation of erythronate-4-phosphate to 3-hydroxy-2-oxo-4-phosphonooxybutanoate. This Escherichia coli (strain ATCC 8739 / DSM 1576 / NBRC 3972 / NCIMB 8545 / WDCM 00012 / Crooks) protein is Erythronate-4-phosphate dehydrogenase.